The chain runs to 161 residues: Nucleotide-binding protein Glov_3198 (161 aa).

This sequence belongs to the YajQ family.

Nucleotide-binding protein. In Trichlorobacter lovleyi (strain ATCC BAA-1151 / DSM 17278 / SZ) (Geobacter lovleyi), this protein is Nucleotide-binding protein Glov_3198.